Here is a 275-residue protein sequence, read N- to C-terminus: Gap junction gamma-3 protein (275 aa).

Residues 1-22 (MCGSFLRRVAAEESRHPTPVGR) are Cytoplasmic-facing. A helical membrane pass occupies residues 23-43 (LLLPALLGLRLVLLAAGGTGV). Over 44-77 (FGGGEEQSEFVCHTQQAGCKAVCYDAFHPLSPLR) the chain is Extracellular. Residues 78–98 (FWAFQVTLVAVPSALYMGFIL) traverse the membrane as a helical segment. Residues 99–134 (YHVIWHWEASEKVKTEEETLSQGEKGGEASRAGSSR) lie on the Cytoplasmic side of the membrane. Residues 135–155 (LLWAYVAQLGVRLALEGAALG) form a helical membrane-spanning segment. At 156-196 (GQYHLYGFRMPSSFVCRLEPCLGSTNCYLSRPSEKSIFLKT) the chain is on the extracellular side. Residues 197–217 (MFGVTGLCLLFTLLELVLLGL) traverse the membrane as a helical segment. At 218-275 (GRWWRIWRHKSPSSNYSPTSQSAKRCKAPTDNFPVVEIRERPGEAGERGSEVPLSARP) the chain is on the cytoplasmic side. The span at 254–267 (EIRERPGEAGERGS) shows a compositional bias: basic and acidic residues. Residues 254 to 275 (EIRERPGEAGERGSEVPLSARP) are disordered.

This sequence belongs to the connexin family. Gamma-type subfamily. A connexon is composed of a hexamer of connexins.

The protein localises to the cell membrane. It localises to the cell junction. It is found in the gap junction. Its function is as follows. One gap junction consists of a cluster of closely packed pairs of transmembrane channels, the connexons, through which materials of low MW diffuse from one cell to a neighboring cell. This Bos taurus (Bovine) protein is Gap junction gamma-3 protein (GJC3).